Here is a 409-residue protein sequence, read N- to C-terminus: Putative competence-damage inducible protein (409 aa).

It belongs to the CinA family.

This is Putative competence-damage inducible protein from Clostridium tetani (strain Massachusetts / E88).